We begin with the raw amino-acid sequence, 215 residues long: Cytochrome b6 (215 aa).

Residues 32–52 (IFYCLGGITLTCFLVQVATGF) traverse the membrane as a helical segment. A heme c-binding site is contributed by Cys35. Residues His86 and His100 each coordinate heme b. 3 helical membrane passes run 90 to 110 (ASMM…TGGF), 116 to 136 (LTWV…VTGY), and 186 to 206 (LHTF…FLMI). Heme b is bound by residues His187 and His202.

Belongs to the cytochrome b family. PetB subfamily. As to quaternary structure, the 4 large subunits of the cytochrome b6-f complex are cytochrome b6, subunit IV (17 kDa polypeptide, PetD), cytochrome f and the Rieske protein, while the 4 small subunits are PetG, PetL, PetM and PetN. The complex functions as a dimer. Heme b is required as a cofactor. The cofactor is heme c.

Its subcellular location is the plastid. The protein localises to the chloroplast thylakoid membrane. Its function is as follows. Component of the cytochrome b6-f complex, which mediates electron transfer between photosystem II (PSII) and photosystem I (PSI), cyclic electron flow around PSI, and state transitions. This Klebsormidium bilatum (Filamentous green alga) protein is Cytochrome b6.